The following is a 496-amino-acid chain: WD repeat-containing protein 37 (496 aa).

Composition is skewed to polar residues over residues 1–13 (MPTE…TARQ) and 22–31 (SLSIRRTNSS). Positions 1 to 50 (MPTESGSCSTARQAKQKRKSHSLSIRRTNSSEQERTGLPREMLEGQDSKL) are disordered. Over residues 32-47 (EQERTGLPREMLEGQD) the composition is skewed to basic and acidic residues. 2 WD repeats span residues 154-194 (GHRD…CLVK) and 197-236 (GHVG…PTPQ). The disordered stretch occupies residues 238–267 (VADTSQQISGEDEIECSDKDEPDIDGDVSS). Over residues 247–265 (GEDEIECSDKDEPDIDGDV) the composition is skewed to acidic residues. WD repeat units follow at residues 281–320 (SHQG…LVHS), 323–362 (GHDQ…IHSV), 367–405 (GHTD…SPIA), 408–447 (RTDS…LARL), and 454–495 (GHRR…LLQE).

As to quaternary structure, forms homodimers. Interacts with PACS1. Interacts with PACS2.

It is found in the cytoplasm. The protein localises to the nucleus. Required for normal ER Ca2+ handling in lymphocytes. Together with PACS1, it plays an essential role in stabilizing peripheral lymphocyte populations. The chain is WD repeat-containing protein 37 (Wdr37) from Mus musculus (Mouse).